The primary structure comprises 299 residues: Sulfate adenylyltransferase subunit 2 (299 aa).

Positions 276–299 are disordered; it reads EREGRVIDHDSAGSMEKKKREGYF.

The protein belongs to the PAPS reductase family. CysD subfamily. In terms of assembly, heterodimer composed of CysD, the smaller subunit, and CysN.

The catalysed reaction is sulfate + ATP + H(+) = adenosine 5'-phosphosulfate + diphosphate. The protein operates within sulfur metabolism; hydrogen sulfide biosynthesis; sulfite from sulfate: step 1/3. Functionally, with CysN forms the ATP sulfurylase (ATPS) that catalyzes the adenylation of sulfate producing adenosine 5'-phosphosulfate (APS) and diphosphate, the first enzymatic step in sulfur assimilation pathway. APS synthesis involves the formation of a high-energy phosphoric-sulfuric acid anhydride bond driven by GTP hydrolysis by CysN coupled to ATP hydrolysis by CysD. In Pseudoalteromonas translucida (strain TAC 125), this protein is Sulfate adenylyltransferase subunit 2.